A 503-amino-acid polypeptide reads, in one-letter code: MSNIGNVEILQIIDSVAREKGISKEILISTVEQAVQAAGRKKYGNEYDIKAQINRKTGEINLLRILKIVEDVEDYLTQISLEEALIKNPEAKIGDEIYEYLPPIDHARVSAQAAKQVITQRVIEAEREKQYHDFKDRKGEIINGIVKRIEYGDIIVDLSRAEAIIKKDQLIKGENFKPNDRIKAYVQDVRQETKGPQIFLSRVDNQMLVKLFKLEVPEILESIIQIKSVARDPGSKAKIAVFAADSSIDPVGSCVGIRGNRVKAVTNELNGEKIDIVLWSNDLAQFIVNALAPLAPGEITKILIDEDRHKVEVVVSQENQSIAIGRRGQNVRLASQLTGWNIDIMTEEQESKRRNEEFLTSTALFMEALDVEEVIGQLLSVTGFNSVEQIASSEISTLTRIEGFEEELAVEIKNRAINYVDLKNEKIIKKLEDLGVEQELIDILELSLELILQFAEYGIKTIEDLGEMSVNEFKNLAPNSNITDENIKLLIKTARQHGALKDS.

Residues 139–203 (GEIINGIVKR…KGPQIFLSRV (65 aa)) form the S1 motif domain. The 71-residue stretch at 308–378 (RHKVEVVVSQ…LDVEEVIGQL (71 aa)) folds into the KH domain.

This sequence belongs to the NusA family. In terms of assembly, monomer. Binds directly to the core enzyme of the DNA-dependent RNA polymerase and to nascent RNA.

The protein resides in the cytoplasm. Functionally, participates in both transcription termination and antitermination. This is Transcription termination/antitermination protein NusA from Rickettsia conorii (strain ATCC VR-613 / Malish 7).